The primary structure comprises 334 residues: Anthranilate phosphoribosyltransferase (334 aa).

5-phospho-alpha-D-ribose 1-diphosphate is bound by residues G79, 82 to 83, S87, 89 to 92, 107 to 115, and S119; these read GD, NIST, and KHGNRSISS. Residue G79 participates in anthranilate binding. S91 contacts Mg(2+). Anthranilate is bound at residue N110. R165 contacts anthranilate. Residues D224 and E225 each contribute to the Mg(2+) site.

It belongs to the anthranilate phosphoribosyltransferase family. Homodimer. It depends on Mg(2+) as a cofactor.

It catalyses the reaction N-(5-phospho-beta-D-ribosyl)anthranilate + diphosphate = 5-phospho-alpha-D-ribose 1-diphosphate + anthranilate. It participates in amino-acid biosynthesis; L-tryptophan biosynthesis; L-tryptophan from chorismate: step 2/5. In terms of biological role, catalyzes the transfer of the phosphoribosyl group of 5-phosphorylribose-1-pyrophosphate (PRPP) to anthranilate to yield N-(5'-phosphoribosyl)-anthranilate (PRA). This chain is Anthranilate phosphoribosyltransferase, found in Streptococcus pneumoniae (strain 70585).